A 359-amino-acid chain; its full sequence is Prostaglandin D2 receptor (359 aa).

Residues 1–21 lie on the Extracellular side of the membrane; the sequence is MKSPFYRCQNTTSVEKGNSAV. A glycan (N-linked (GlcNAc...) asparagine) is linked at Asn10. A helical membrane pass occupies residues 22 to 42; sequence MGGVLFSTGLLGNLLALGLLA. The Cytoplasmic segment spans residues 43-59; it reads RSGLGWCSRRPLRPLPS. The chain crosses the membrane as a helical span at residues 60 to 80; it reads VFYMLVCGLTVTDLLGKCLLS. Residues 81-107 are Extracellular-facing; that stretch reads PVVLAAYAQNRSLRVLAPALDNSLCQA. Asn90 carries an N-linked (GlcNAc...) asparagine glycan. Residues Cys105 and Cys183 are joined by a disulfide bond. A helical transmembrane segment spans residues 108–128; that stretch reads FAFFMSFFGLSSTLQLLAMAL. Over 129 to 150 the chain is Cytoplasmic; it reads ECWLSLGHPFFYRRHITLRLGA. Residues 151-171 traverse the membrane as a helical segment; that stretch reads LVAPVVSAFSLAFCALPFMGF. The Extracellular segment spans residues 172–195; the sequence is GKFVQYCPGTWCFIQMVHEEGSLS. The chain crosses the membrane as a helical span at residues 196–216; the sequence is VLGYSVLYSSLMALLVLATVL. At 217-262 the chain is on the cytoplasmic side; it reads CNLGAMRNLYAMHRRLQRHPRSCTRDCAEPRADGREASPQPLEELD. Residues 263–283 form a helical membrane-spanning segment; the sequence is HLLLLALMTVLFTMCSLPVIY. The Extracellular portion of the chain corresponds to 284 to 310; it reads RAYYGAFKDVKEKNRTSEEAEDLRALR. Asn297 is a glycosylation site (N-linked (GlcNAc...) asparagine). The helical transmembrane segment at 311–331 threads the bilayer; sequence FLSVISIVDPWIFIIFRSPVF. Over 332–359 the chain is Cytoplasmic; that stretch reads RIFFHKIFIRPLRYRSRCSNSTNMESSL.

Belongs to the G-protein coupled receptor 1 family. As to expression, expressed in retinal choroid, ciliary epithelium, longitudinal and circular ciliary muscles, iris, small intestine and platelet membranes.

It is found in the cell membrane. Receptor for prostaglandin D2 (PGD2). The activity of this receptor is mainly mediated by G(s) proteins that stimulate adenylate cyclase, resulting in an elevation of intracellular cAMP. A mobilization of calcium is also observed, but without formation of inositol 1,4,5-trisphosphate. Involved in PLA2G3-dependent maturation of mast cells. PLA2G3 is secreted by immature mast cells and acts on nearby fibroblasts upstream to PTDGS to synthesize PGD2, which in turn promotes mast cell maturation and degranulation via PTGDR. The chain is Prostaglandin D2 receptor (PTGDR) from Homo sapiens (Human).